Here is a 92-residue protein sequence, read N- to C-terminus: MLEFLNRFFGRESSSSKNVAKERLRLVLVHDRANVSPELLTSLKNDLIKVISNYMEIDDKALEVSLDGDDNQVALVANIPVKRLKRANSPVL.

Belongs to the MinE family.

Functionally, prevents the cell division inhibition by proteins MinC and MinD at internal division sites while permitting inhibition at polar sites. This ensures cell division at the proper site by restricting the formation of a division septum at the midpoint of the long axis of the cell. The chain is Cell division topological specificity factor from Desulforamulus reducens (strain ATCC BAA-1160 / DSM 100696 / MI-1) (Desulfotomaculum reducens).